The following is a 384-amino-acid chain: tRNA-specific 2-thiouridylase MnmA (384 aa).

ATP-binding positions include 9–16 and M35; that span reads GMSGGVDS. The segment at 95–97 is interaction with target base in tRNA; sequence NPD. C100 serves as the catalytic Nucleophile. C100 and C196 are joined by a disulfide. An ATP-binding site is contributed by G124. The interval 146-148 is interaction with tRNA; it reads KDQ. C196 acts as the Cysteine persulfide intermediate in catalysis. An interaction with tRNA region spans residues 308-309; sequence RY.

The protein belongs to the MnmA/TRMU family.

It localises to the cytoplasm. The enzyme catalyses S-sulfanyl-L-cysteinyl-[protein] + uridine(34) in tRNA + AH2 + ATP = 2-thiouridine(34) in tRNA + L-cysteinyl-[protein] + A + AMP + diphosphate + H(+). Functionally, catalyzes the 2-thiolation of uridine at the wobble position (U34) of tRNA, leading to the formation of s(2)U34. This Burkholderia vietnamiensis (strain G4 / LMG 22486) (Burkholderia cepacia (strain R1808)) protein is tRNA-specific 2-thiouridylase MnmA.